Reading from the N-terminus, the 2364-residue chain is Spectrin beta chain, non-erythrocytic 1 (2364 aa).

Residue Thr2 is modified to N-acetylthreonine. Positions Thr2–His275 are actin-binding. Ile14 and Ser36 each carry phosphoserine. Calponin-homology (CH) domains lie at Ala54 to Gln158 and Lys173 to Ser278. Lys90 bears the N6-acetyllysine mark. Ser228 bears the Phosphoserine mark. Spectrin repeat units follow at residues Met303–Arg411, Leu423–Glu525, Leu530–Glu636, Arg639–Glu742, Leu745–Asp847, Ala850–Leu952, Ile957–Glu1060, Lys1063–Ser1166, Ala1170–Arg1258, Asp1276–Leu1376, Lys1381–Leu1482, Glu1486–Glu1590, His1592–Glu1696, His1698–Leu1801, and Tyr1805–Leu1907. Ser817, Ser825, Ser903, Ser1057, Ser1076, Ser1079, and Ser1237 each carry phosphoserine. A phosphoserine mark is found at Ser1388, Ser1447, and Ser1557. The tract at residues Ile1563–Glu2093 is interaction with ANK2. Position 1805 is a phosphotyrosine (Tyr1805). Lys1815, Lys1913, and Lys1989 each carry N6-acetyllysine. Spectrin repeat units follow at residues Phe1914–Arg2014 and Glu2018–Lys2097. The tract at residues Arg2089–Pro2196 is disordered. Phosphoserine is present on residues Ser2102, Ser2128, and Ser2138. Polar residues predominate over residues Ser2115 to Gly2131. Polar residues predominate over residues Val2145 to Pro2166. At Thr2147 the chain carries Phosphothreonine. At Ser2148 the chain carries Phosphoserine. The interval Glu2149–Lys2177 is mediates interaction with CAMSAP1. Position 2159 is a phosphothreonine (Thr2159). A phosphoserine mark is found at Ser2160, Ser2161, Ser2164, Ser2165, and Ser2169. Residue Thr2171 is modified to Phosphothreonine. Phosphoserine is present on residues Ser2172 and Ser2184. Residues Ser2184–Pro2196 are compositionally biased toward polar residues. Phosphothreonine occurs at positions 2187 and 2195. Residues Ser2197–Ser2307 enclose the PH domain. Residues Asp2309–Lys2364 form a disordered region. 2 positions are modified to phosphoserine: Ser2314 and Ser2319. The segment covering Ser2314–Ser2341 has biased composition (polar residues). Residue Thr2320 is modified to Phosphothreonine. O-linked (GlcNAc) serine glycosylation is present at Ser2324. Thr2328 is subject to Phosphothreonine. A phosphoserine mark is found at Ser2340 and Ser2341. A compositionally biased stretch (basic and acidic residues) spans Pro2342 to Phe2357.

It belongs to the spectrin family. In terms of assembly, interacts with CAMSAP1. Interacts with ANK2. Interacts with CPNE4 (via VWFA domain). Like erythrocyte spectrin, the spectrin-like proteins are capable to form dimers which can further associate to tetramers. Can form heterodimers with SPTAN1. Isoform Short cannot bind to the axonal protein fodaxin. Isoform 2 is present in brain, lung and kidney (at protein level).

The protein localises to the cytoplasm. It localises to the cytoskeleton. The protein resides in the myofibril. Its subcellular location is the sarcomere. It is found in the m line. The protein localises to the cytosol. It localises to the cell membrane. Functionally, fodrin, which seems to be involved in secretion, interacts with calmodulin in a calcium-dependent manner and is thus candidate for the calcium-dependent movement of the cytoskeleton at the membrane. Plays a critical role in central nervous system development and function. The polypeptide is Spectrin beta chain, non-erythrocytic 1 (SPTBN1) (Homo sapiens (Human)).